The following is a 362-amino-acid chain: MSQNSLRLVEDKSVDKSKALEAALSQIERSFGKGSIMKLGSNENVVEIETVSTGSLGLDIALGIGGLPKGRIIEIYGPESSGKTTLALQTIAESQKKGGICAFVDAEHALDPVYARKLGVDLQNLLISQPDTGEQALEITDTLVRSGAVDVLVVDSVAALTPRAEIEGEMGDSLPGMQARLMSQALRKLTASISKSNCMVIFINQIRMKIGVMFGSPETTTGGNALKFYASVRLDIRRIGSVKEREEVVGNQTRVKVVKNKMAPPFKQVEFDIMYGEGVSKTGELVDLGVKAGIVEKSGAWFSYNSQRLGQGRENAKTFLRDNPDLAREIELALRQNAGLIADRFLQNGGPDADDGDAAAEM.

Position 77-84 (77-84 (GPESSGKT)) interacts with ATP.

The protein belongs to the RecA family.

It is found in the cytoplasm. Functionally, can catalyze the hydrolysis of ATP in the presence of single-stranded DNA, the ATP-dependent uptake of single-stranded DNA by duplex DNA, and the ATP-dependent hybridization of homologous single-stranded DNAs. It interacts with LexA causing its activation and leading to its autocatalytic cleavage. The protein is Protein RecA of Rhizobium etli (strain ATCC 51251 / DSM 11541 / JCM 21823 / NBRC 15573 / CFN 42).